A 678-amino-acid polypeptide reads, in one-letter code: Probable 3',5'-cyclic phosphodiesterase pde-3 (678 aa).

Disordered regions lie at residues 1–27 (MSPGPPAVGGVSPPVMVPGSAPPFQPT), 52–95 (AEMR…VLGG), and 223–250 (TVPAEPNKARSSSYWKTEASPSNNNEHE). Over residues 7–19 (AVGGVSPPVMVPG) the composition is skewed to low complexity. Composition is skewed to polar residues over residues 60–85 (TATSSPASSGVSIQQRRGSTTQNSGV) and 231–246 (ARSSSYWKTEASPSNN). A PDEase domain is found at 281-632 (RYDTRELDTD…RKWKEQIELE (352 aa)). Histidine 356 serves as the catalytic Proton donor. Residues histidine 360, histidine 421, aspartate 422, and aspartate 531 each coordinate a divalent metal cation. The interval 654–678 (EEESASTSDSPDPRRDSPLDSDLSQ) is disordered.

The protein belongs to the cyclic nucleotide phosphodiesterase family. Requires a divalent metal cation as cofactor.

The enzyme catalyses a nucleoside 3',5'-cyclic phosphate + H2O = a nucleoside 5'-phosphate + H(+). This Caenorhabditis elegans protein is Probable 3',5'-cyclic phosphodiesterase pde-3 (pde-3).